We begin with the raw amino-acid sequence, 257 residues long: NH(3)-dependent NAD(+) synthetase (257 aa).

32-39 (GLSGGVDS) contacts ATP. D38 is a binding site for Mg(2+). Position 113 (R113) interacts with deamido-NAD(+). T133 lines the ATP pocket. E138 contributes to the Mg(2+) binding site. Residues K162 and S184 each contribute to the ATP site.

This sequence belongs to the NAD synthetase family. In terms of assembly, homodimer.

The catalysed reaction is deamido-NAD(+) + NH4(+) + ATP = AMP + diphosphate + NAD(+) + H(+). It participates in cofactor biosynthesis; NAD(+) biosynthesis; NAD(+) from deamido-NAD(+) (ammonia route): step 1/1. Its function is as follows. Catalyzes the ATP-dependent amidation of deamido-NAD to form NAD. Uses ammonia as a nitrogen source. The chain is NH(3)-dependent NAD(+) synthetase from Wolinella succinogenes (strain ATCC 29543 / DSM 1740 / CCUG 13145 / JCM 31913 / LMG 7466 / NCTC 11488 / FDC 602W) (Vibrio succinogenes).